The primary structure comprises 470 residues: Uronate isomerase (470 aa).

The protein belongs to the metallo-dependent hydrolases superfamily. Uronate isomerase family.

The enzyme catalyses D-glucuronate = D-fructuronate. It catalyses the reaction aldehydo-D-galacturonate = keto-D-tagaturonate. The protein operates within carbohydrate metabolism; pentose and glucuronate interconversion. This chain is Uronate isomerase, found in Sphingopyxis alaskensis (strain DSM 13593 / LMG 18877 / RB2256) (Sphingomonas alaskensis).